Here is a 168-residue protein sequence, read N- to C-terminus: Peptide deformylase (168 aa).

Residues C92 and H134 each coordinate Fe cation. E135 is an active-site residue. A Fe cation-binding site is contributed by H138.

The protein belongs to the polypeptide deformylase family. Fe(2+) is required as a cofactor.

It catalyses the reaction N-terminal N-formyl-L-methionyl-[peptide] + H2O = N-terminal L-methionyl-[peptide] + formate. Its function is as follows. Removes the formyl group from the N-terminal Met of newly synthesized proteins. Requires at least a dipeptide for an efficient rate of reaction. N-terminal L-methionine is a prerequisite for activity but the enzyme has broad specificity at other positions. This chain is Peptide deformylase, found in Azotobacter vinelandii (strain DJ / ATCC BAA-1303).